The following is a 1384-amino-acid chain: Hepatocyte growth factor receptor (1384 aa).

Residues 1-24 form the signal peptide; that stretch reads MKAPAVLAPGILVLLFTFVQKSNG. Residues 25 to 933 lie on the Extracellular side of the membrane; it reads ECKEALVKSR…VIVQPDQNFT (909 aa). In terms of domain architecture, Sema spans 27–516; the sequence is KEALVKSRMN…TGKKITKIPL (490 aa). N-linked (GlcNAc...) asparagine glycosylation is present at asparagine 45. 4 disulfides stabilise this stretch: cysteine 95–cysteine 101, cysteine 98–cysteine 160, cysteine 133–cysteine 141, and cysteine 173–cysteine 176. N-linked (GlcNAc...) asparagine glycosylation is present at asparagine 106. The N-linked (GlcNAc...) asparagine glycan is linked to asparagine 149. N-linked (GlcNAc...) asparagine glycosylation is found at asparagine 203 and asparagine 359. 2 cysteine pairs are disulfide-bonded: cysteine 299/cysteine 364 and cysteine 386/cysteine 398. Asparagine 400 and asparagine 406 each carry an N-linked (GlcNAc...) asparagine glycan. 4 disulfides stabilise this stretch: cysteine 521-cysteine 539, cysteine 527-cysteine 562, cysteine 530-cysteine 546, and cysteine 542-cysteine 552. IPT/TIG domains follow at residues 564–656, 658–740, and 743–837; these read PTIY…FSYV, PIIT…FIYR, and PIVY…LIYV. The O-linked (Man) threonine glycan is linked to threonine 583. 2 N-linked (GlcNAc...) asparagine glycosylation sites follow: asparagine 608 and asparagine 636. Threonine 677 and threonine 762 each carry an O-linked (Man) threonine glycan. 3 N-linked (GlcNAc...) asparagine glycosylation sites follow: asparagine 786, asparagine 880, and asparagine 931. A helical transmembrane segment spans residues 934–956; the sequence is GLIVGVVSVSIILLLLLGLFLWL. At 957-1384 the chain is on the cytoplasmic side; that stretch reads KKRKQIKDLG…NVSGEDDDDT (428 aa). Serine 967 carries the post-translational modification Phosphoserine. Threonine 978 bears the Phosphothreonine mark. Phosphoserine is present on residues serine 991, serine 998, and serine 1001. Tyrosine 1004 is subject to Phosphotyrosine. The Protein kinase domain occupies 1079–1346; that stretch reads VHFNEVIGRG…RIAAIFSAFI (268 aa). ATP-binding positions include 1085–1093 and lysine 1111; that span reads IGRGHFGCV. Catalysis depends on aspartate 1205, which acts as the Proton acceptor. Positions 1213–1382 are interaction with RANBP9; sequence LDEKFTVKVA…QENVSGEDDD (170 aa). Position 1231 is a phosphotyrosine (tyrosine 1231). 2 positions are modified to phosphotyrosine; by autocatalysis: tyrosine 1235 and tyrosine 1236. Threonine 1290 is modified (phosphothreonine). Residues 1321 to 1360 are interaction with MUC20; the sequence is WHPKAELRPSFSELVSRIAAIFSAFIGEHYVHVNATYVNV. Residues tyrosine 1350 and tyrosine 1357 each carry the phosphotyrosine; by autocatalysis modification. Residue tyrosine 1366 is modified to Phosphotyrosine.

This sequence belongs to the protein kinase superfamily. Tyr protein kinase family. Heterodimer made of an alpha chain (50 kDa) and a beta chain (145 kDa) which are disulfide linked. Binds PLXNB1. Interacts when phosphorylated with downstream effectors including STAT3, PIK3R1, SRC, PCLG1, GRB2 and GAB1. Interacts with SPSB1, SPSB2 and SPSB4. Interacts with INPP5D/SHIP1. When phosphorylated at Tyr-1357, interacts with INPPL1/SHIP2. Interacts with RANBP9 and RANBP10, as well as SPSB1, SPSB2, SPSB3 and SPSB4. SPSB1 binding occurs in the presence and in the absence of HGF, however HGF treatment has a positive effect on this interaction. Interacts with MUC20; prevents interaction with GRB2 and suppresses hepatocyte growth factor-induced cell proliferation. Interacts with GRB10. Interacts with PTPN1 and PTPN2. Interacts with HSP90AA1 and HSP90AB1; the interaction suppresses MET kinase activity. Interacts with tensin TNS3. Interacts (when phosphorylated) with tensin TNS4 (via SH2 domain); the interaction increases MET protein stability by inhibiting MET endocytosis and subsequent lysosomal degradation. Post-translationally, autophosphorylated in response to ligand binding on Tyr-1235 and Tyr-1236 in the kinase domain leading to further phosphorylation of Tyr-1350 and Tyr-1357 in the C-terminal multifunctional docking site. Dephosphorylated by PTPRJ at Tyr-1350 and Tyr-1366. Dephosphorylated by PTPN1 and PTPN2. Ubiquitinated. Ubiquitination by CBL regulates the receptor stability and activity through proteasomal degradation. In terms of processing, O-mannosylation of IPT/TIG domains by TMEM260 is required for protein maturation. O-mannosylated residues are composed of single mannose glycans that are not elongated or modified.

Its subcellular location is the membrane. It carries out the reaction L-tyrosyl-[protein] + ATP = O-phospho-L-tyrosyl-[protein] + ADP + H(+). Its activity is regulated as follows. In its inactive state, the C-terminal tail interacts with the catalytic domain and inhibits the kinase activity. Upon ligand binding, the C-terminal tail is displaced and becomes phosphorylated, thus increasing the kinase activity. In terms of biological role, receptor tyrosine kinase that transduces signals from the extracellular matrix into the cytoplasm by binding to hepatocyte growth factor/HGF ligand. Regulates many physiological processes including proliferation, scattering, morphogenesis and survival. Ligand binding at the cell surface induces autophosphorylation of MET on its intracellular domain that provides docking sites for downstream signaling molecules. Following activation by ligand, interacts with the PI3-kinase subunit PIK3R1, PLCG1, SRC, GRB2, STAT3 or the adapter GAB1. Recruitment of these downstream effectors by MET leads to the activation of several signaling cascades including the RAS-ERK, PI3 kinase-AKT, or PLCgamma-PKC. The RAS-ERK activation is associated with the morphogenetic effects while PI3K/AKT coordinates prosurvival effects. During embryonic development, MET signaling plays a role in gastrulation, development and migration of muscles and neuronal precursors, angiogenesis and kidney formation. In adults, participates in wound healing as well as organ regeneration and tissue remodeling. Also promotes differentiation and proliferation of hematopoietic cells. The polypeptide is Hepatocyte growth factor receptor (MET) (Ovis aries (Sheep)).